The following is a 70-amino-acid chain: U-actitoxin-Ael2c (70 aa).

A signal peptide spans Ser1–Ile21. The propeptide occupies Pro22–Glu26. 3 disulfides stabilise this stretch: Cys32/Cys65, Cys34/Cys58, and Cys48/Cys66.

This sequence belongs to the sea anemone type 3 (BDS) potassium channel toxin family.

The protein resides in the secreted. The protein localises to the nematocyst. In terms of biological role, potently and selectively inhibits voltage-gated potassium channels Kv11/KCNH/ERG. Acts as a gating-modifier toxin that shifts the voltage-dependence of ERG activation in the positive direction and suppresses its current amplitudes elicited by strong depolarizing pulses that maximally activate the channels. The polypeptide is U-actitoxin-Ael2c (Anthopleura elegantissima (Green aggregating anemone)).